The chain runs to 253 residues: Hydroxyacylglutathione hydrolase (253 aa).

Zn(2+)-binding residues include histidine 59, histidine 61, aspartate 63, histidine 64, histidine 118, aspartate 143, and histidine 181.

It belongs to the metallo-beta-lactamase superfamily. Glyoxalase II family. Monomer. Zn(2+) serves as cofactor.

The enzyme catalyses an S-(2-hydroxyacyl)glutathione + H2O = a 2-hydroxy carboxylate + glutathione + H(+). Its pathway is secondary metabolite metabolism; methylglyoxal degradation; (R)-lactate from methylglyoxal: step 2/2. In terms of biological role, thiolesterase that catalyzes the hydrolysis of S-D-lactoyl-glutathione to form glutathione and D-lactic acid. The protein is Hydroxyacylglutathione hydrolase of Prochlorococcus marinus (strain MIT 9211).